We begin with the raw amino-acid sequence, 349 residues long: Succinylglutamate desuccinylase (349 aa).

Zn(2+) contacts are provided by H70, E73, and H166. The active site involves E229.

This sequence belongs to the AspA/AstE family. Succinylglutamate desuccinylase subfamily. Zn(2+) serves as cofactor.

It carries out the reaction N-succinyl-L-glutamate + H2O = L-glutamate + succinate. The protein operates within amino-acid degradation; L-arginine degradation via AST pathway; L-glutamate and succinate from L-arginine: step 5/5. Transforms N(2)-succinylglutamate into succinate and glutamate. The sequence is that of Succinylglutamate desuccinylase from Burkholderia pseudomallei (strain 1710b).